The chain runs to 829 residues: Periplasmic nitrate reductase (829 aa).

The segment at residues 1–29 (MKMTRRAFVKANAAASAAAVAGVTLPASA) is a signal peptide (tat-type signal). The region spanning 41–97 (IKWDKAPCRFCGTGCSVLVGTQNGRVVATQGDPEAPVNKGLNCIKGYFLSKIMYGKD) is the 4Fe-4S Mo/W bis-MGD-type domain. Residues Cys48, Cys51, Cys55, and Cys83 each contribute to the [4Fe-4S] cluster site. Residues Lys85, Gln152, Asn177, Cys181, 214–221 (WGSNMAEM), 245–249 (STYYH), 264–266 (QSD), Met374, Gln378, Asn484, 510–511 (SD), Lys533, Asp560, and 718–727 (TGRVLEHWHT) contribute to the Mo-bis(molybdopterin guanine dinucleotide) site. Position 794 (Phe794) interacts with substrate. Positions 802 and 819 each coordinate Mo-bis(molybdopterin guanine dinucleotide).

This sequence belongs to the prokaryotic molybdopterin-containing oxidoreductase family. NasA/NapA/NarB subfamily. In terms of assembly, component of the periplasmic nitrate reductase NapAB complex composed of NapA and NapB. Requires [4Fe-4S] cluster as cofactor. Mo-bis(molybdopterin guanine dinucleotide) is required as a cofactor. In terms of processing, predicted to be exported by the Tat system. The position of the signal peptide cleavage has not been experimentally proven.

It is found in the periplasm. The catalysed reaction is 2 Fe(II)-[cytochrome] + nitrate + 2 H(+) = 2 Fe(III)-[cytochrome] + nitrite + H2O. Catalytic subunit of the periplasmic nitrate reductase complex NapAB. Receives electrons from NapB and catalyzes the reduction of nitrate to nitrite. This is Periplasmic nitrate reductase from Aliivibrio fischeri (strain MJ11) (Vibrio fischeri).